A 264-amino-acid chain; its full sequence is Thymidylate synthase (264 aa).

Residue arginine 21 coordinates dUMP. Histidine 51 lines the (6R)-5,10-methylene-5,6,7,8-tetrahydrofolate pocket. A dUMP-binding site is contributed by 126–127 (RR). Cysteine 146 (nucleophile) is an active-site residue. DUMP contacts are provided by residues 166-169 (RSAD), asparagine 177, and 207-209 (HLY). Aspartate 169 provides a ligand contact to (6R)-5,10-methylene-5,6,7,8-tetrahydrofolate. Alanine 263 is a (6R)-5,10-methylene-5,6,7,8-tetrahydrofolate binding site.

This sequence belongs to the thymidylate synthase family. Bacterial-type ThyA subfamily. Homodimer.

It localises to the cytoplasm. The enzyme catalyses dUMP + (6R)-5,10-methylene-5,6,7,8-tetrahydrofolate = 7,8-dihydrofolate + dTMP. Its pathway is pyrimidine metabolism; dTTP biosynthesis. Catalyzes the reductive methylation of 2'-deoxyuridine-5'-monophosphate (dUMP) to 2'-deoxythymidine-5'-monophosphate (dTMP) while utilizing 5,10-methylenetetrahydrofolate (mTHF) as the methyl donor and reductant in the reaction, yielding dihydrofolate (DHF) as a by-product. This enzymatic reaction provides an intracellular de novo source of dTMP, an essential precursor for DNA biosynthesis. This is Thymidylate synthase from Dechloromonas aromatica (strain RCB).